The following is a 383-amino-acid chain: MAKKQKNLDDITKKFGDERQKALDNALKNIEKDFGKGAIMRLGERAEQKVQVMSSGSLALDIALGAGGYPKGRIIEIYGPESSGKTTVALHAVAQAQKEGGIAAFIDAEHALDPSYAAALGVNIDELLLSQPDSGEQGLEIAGKLIDSGAVDLVVIDSVAALVPRAEIDGDIGDSHVGLQARMMSQAMRKLSASINKTKTIAIFINQLREKVGVMFGNPETTPGGRALKFYASVRLDVRGNTQIKGTGDAKDTNVGKETKIKVVKNKVAPPFKEAFVEIMYGEGISKTGELIKIATDLNIIKKAGAWYSYNDEKIGQGSENAKKYLADHPEVFDEIDRQVRVRFGLIEDDQEGEATAAETTGKITENIEEVTLELDDAIEIEE.

Residue 79-86 (GPESSGKT) participates in ATP binding.

The protein belongs to the RecA family.

The protein localises to the cytoplasm. Can catalyze the hydrolysis of ATP in the presence of single-stranded DNA, the ATP-dependent uptake of single-stranded DNA by duplex DNA, and the ATP-dependent hybridization of homologous single-stranded DNAs. It interacts with LexA causing its activation and leading to its autocatalytic cleavage. The protein is Protein RecA of Streptococcus gordonii (strain Challis / ATCC 35105 / BCRC 15272 / CH1 / DL1 / V288).